Consider the following 282-residue polypeptide: Putative hydrolase Bcep18194_B0137 (282 aa).

The Mg(2+) site is built by glutamate 124, glutamate 126, and aspartate 155.

This sequence belongs to the FAH family. It depends on Mg(2+) as a cofactor.

This chain is Putative hydrolase Bcep18194_B0137, found in Burkholderia lata (strain ATCC 17760 / DSM 23089 / LMG 22485 / NCIMB 9086 / R18194 / 383).